We begin with the raw amino-acid sequence, 230 residues long: uncharacterized protein (230 aa).

The segment covering 1–11 has biased composition (polar residues); sequence MPVPSVTVTTD. The interval 1 to 88 is disordered; sequence MPVPSVTVTT…TLKRPTSNSI (88 aa). The segment covering 63 to 73 has biased composition (basic and acidic residues); it reads DDQHRHSDVHS. The span at 79–88 shows a compositional bias: polar residues; that stretch reads TLKRPTSNSI. Ser106 is subject to Phosphoserine. The segment covering 156-179 has biased composition (basic and acidic residues); the sequence is LKREDSRVSSTKKEHINDHTDMHS. The disordered stretch occupies residues 156 to 203; that stretch reads LKREDSRVSSTKKEHINDHTDMHSTRSKVTTNSQGSSLEPNKLNMAVE. Residues 182 to 194 show a composition bias toward polar residues; that stretch reads SKVTTNSQGSSLE.

This is an uncharacterized protein from Saccharomyces cerevisiae (strain ATCC 204508 / S288c) (Baker's yeast).